The primary structure comprises 217 residues: Probable GTP-binding protein EngB (217 aa).

The region spanning 29–213 (GPLEVAFAGR…RQAIGETVGV (185 aa)) is the EngB-type G domain. Residues 37–44 (GRSNVGKS), 64–68 (GRTQE), 91–94 (DMPG), 158–161 (TKTD), and 192–194 (TSS) each bind GTP. Positions 44 and 66 each coordinate Mg(2+).

Belongs to the TRAFAC class TrmE-Era-EngA-EngB-Septin-like GTPase superfamily. EngB GTPase family. Mg(2+) is required as a cofactor.

Its function is as follows. Necessary for normal cell division and for the maintenance of normal septation. This Rhizobium leguminosarum bv. trifolii (strain WSM2304) protein is Probable GTP-binding protein EngB.